A 264-amino-acid chain; its full sequence is Small ribosomal subunit protein eS1 (264 aa).

Residues 233 to 264 (GEGGGAGKPSGDEAGAKVERADGYEPPVQESV) are disordered. Residues 242–255 (SGDEAGAKVERADG) are compositionally biased toward basic and acidic residues.

It belongs to the eukaryotic ribosomal protein eS1 family. As to quaternary structure, component of the small ribosomal subunit. Mature ribosomes consist of a small (40S) and a large (60S) subunit. The 40S subunit contains about 33 different proteins and 1 molecule of RNA (18S). The 60S subunit contains about 49 different proteins and 3 molecules of RNA (25S, 5.8S and 5S).

It localises to the cytoplasm. This chain is Small ribosomal subunit protein eS1, found in Eimeria tenella (Coccidian parasite).